The primary structure comprises 705 residues: Elongation factor G 2 (705 aa).

Positions 8–288 (ERYRNIGISA…AVIDYLPSPA (281 aa)) constitute a tr-type G domain. GTP contacts are provided by residues 17-24 (AHIDAGKT), 86-90 (DTPGH), and 140-143 (NKMD).

It belongs to the TRAFAC class translation factor GTPase superfamily. Classic translation factor GTPase family. EF-G/EF-2 subfamily.

It localises to the cytoplasm. Its function is as follows. Catalyzes the GTP-dependent ribosomal translocation step during translation elongation. During this step, the ribosome changes from the pre-translocational (PRE) to the post-translocational (POST) state as the newly formed A-site-bound peptidyl-tRNA and P-site-bound deacylated tRNA move to the P and E sites, respectively. Catalyzes the coordinated movement of the two tRNA molecules, the mRNA and conformational changes in the ribosome. In Bordetella parapertussis (strain 12822 / ATCC BAA-587 / NCTC 13253), this protein is Elongation factor G 2.